Here is a 147-residue protein sequence, read N- to C-terminus: Basic phospholipase A2 beta-bungarotoxin A1 chain (147 aa).

The N-terminal stretch at 1–19 (MNPAHLLVLSAVCVSLLGA) is a signal peptide. Positions 20 to 27 (ANIPPHPL) are excised as a propeptide. 6 cysteine pairs are disulfide-bonded: cysteine 54–cysteine 146, cysteine 56–cysteine 72, cysteine 71–cysteine 127, cysteine 78–cysteine 120, cysteine 88–cysteine 113, and cysteine 106–cysteine 118. Tyrosine 55, glycine 57, and glycine 59 together coordinate Ca(2+). Residue histidine 75 is part of the active site. Aspartate 76 is a Ca(2+) binding site. The active site involves aspartate 121.

Belongs to the phospholipase A2 family. Group I subfamily. D49 sub-subfamily. In terms of assembly, heterodimer; disulfide-linked. The A chains have phospholipase A2 activity and the B chains show homology with the basic protease inhibitors. The A1 chain is found in beta-1 and beta-2 bungarotoxins. It depends on Ca(2+) as a cofactor. As to expression, expressed by the venom gland.

It localises to the secreted. It catalyses the reaction a 1,2-diacyl-sn-glycero-3-phosphocholine + H2O = a 1-acyl-sn-glycero-3-phosphocholine + a fatty acid + H(+). In terms of biological role, snake venom phospholipase A2 (PLA2) that inhibits neuromuscular transmission by blocking acetylcholine release from the nerve termini. PLA2 catalyzes the calcium-dependent hydrolysis of the 2-acyl groups in 3-sn-phosphoglycerides. This Bungarus multicinctus (Many-banded krait) protein is Basic phospholipase A2 beta-bungarotoxin A1 chain.